The following is a 959-amino-acid chain: Alanine--tRNA ligase (959 aa).

The residue at position 389 (Ser-389) is a Phosphoserine. Zn(2+)-binding residues include His-606, His-610, Cys-725, and His-729.

It belongs to the class-II aminoacyl-tRNA synthetase family. In terms of assembly, monomer. Requires Zn(2+) as cofactor.

The protein localises to the mitochondrion. It localises to the cytoplasm. It carries out the reaction tRNA(Ala) + L-alanine + ATP = L-alanyl-tRNA(Ala) + AMP + diphosphate. Functionally, catalyzes the attachment of alanine to tRNA(Ala) in a two-step reaction: alanine is first activated by ATP to form Ala-AMP and then transferred to the acceptor end of tRNA(Ala). Also edits incorrectly charged tRNA(Ala) via its editing domain. The chain is Alanine--tRNA ligase (ala1) from Schizosaccharomyces pombe (strain 972 / ATCC 24843) (Fission yeast).